Here is a 368-residue protein sequence, read N- to C-terminus: MSDNTVKIKKQTIDPTLTLEDVKKQLIEKGKKEGHLSHEEIAEKLQNFDIDSDQMDDFFDQLNDNDISLVNEKDSSDTDEKLNPSDLSAPPGVKINDPVRMYLKEIGRVNLLSAQEEIELAKRIEQGDEVAKSRLAEANLRLVVSIAKRYVGRGMLFLDLIQEGNMGLIKAVEKFDFNKGFKFSTYATWWIRQAITRAIADQARTIRIPVHMVETINKLIRVQRQLLQDLGRDPAPEEIGEEMDLPAEKVREILKIAQEPVSLETPIGEEDDSHLGDFIEDQEAQSPSDHAAYELLKEQLEDVLDTLTDREENVLRLRFGLDDGRTRTLEEVGKVFGVTRERIRQIEAKALRKLRHPSRSKRLKDFMD.

The interval 16-90 (TLTLEDVKKQ…KLNPSDLSAP (75 aa)) is sigma-70 factor domain-1. Residues 69-90 (LVNEKDSSDTDEKLNPSDLSAP) are disordered. Over residues 71-83 (NEKDSSDTDEKLN) the composition is skewed to basic and acidic residues. A sigma-70 factor domain-2 region spans residues 135 to 205 (LAEANLRLVV…TRAIADQART (71 aa)). The short motif at 159 to 162 (DLIQ) is the Interaction with polymerase core subunit RpoC element. A sigma-70 factor domain-3 region spans residues 214 to 291 (ETINKLIRVQ…QEAQSPSDHA (78 aa)). The tract at residues 303 to 356 (VLDTLTDREENVLRLRFGLDDGRTRTLEEVGKVFGVTRERIRQIEAKALRKLRH) is sigma-70 factor domain-4. The segment at residues 329-348 (LEEVGKVFGVTRERIRQIEA) is a DNA-binding region (H-T-H motif).

The protein belongs to the sigma-70 factor family. RpoD/SigA subfamily. As to quaternary structure, interacts transiently with the RNA polymerase catalytic core formed by RpoA, RpoB, RpoC and RpoZ (2 alpha, 1 beta, 1 beta' and 1 omega subunit) to form the RNA polymerase holoenzyme that can initiate transcription. Interacts (via sigma-70 factor domain 4) with the phage G1 protein gp67; this inhibits rRNA synthesis. Interaction with phage G1 protein gp67 does not inhibit transcription in general, but selectively inhibits transcription from promoters that require interaction of the RNA polymerase alpha subunit with DNA sequences upstream of the -35 promoter element.

The protein localises to the cytoplasm. Functionally, sigma factors are initiation factors that promote the attachment of RNA polymerase to specific initiation sites and are then released. This sigma factor is the primary sigma factor during exponential growth. This is RNA polymerase sigma factor SigA from Staphylococcus aureus (strain NCTC 8325 / PS 47).